Reading from the N-terminus, the 50-residue chain is Large ribosomal subunit protein bL33 (50 aa).

This sequence belongs to the bacterial ribosomal protein bL33 family.

This is Large ribosomal subunit protein bL33 from Sulfurovum sp. (strain NBC37-1).